The following is a 263-amino-acid chain: Probable ABC transporter permease protein ycf63 (263 aa).

The next 6 helical transmembrane spans lie at 43–63, 82–102, 136–156, 159–179, 199–219, and 230–250; these read LVGP…SMVF, AVIV…VIIA, LVFP…TISL, SIAI…SIFL, LCFG…SSGG, and SVVT…YFMF.

Belongs to the MlaE permease family.

It is found in the plastid. Its subcellular location is the chloroplast membrane. Its function is as follows. Could be part of an ABC transporter complex. The sequence is that of Probable ABC transporter permease protein ycf63 (ycf63) from Porphyra purpurea (Red seaweed).